We begin with the raw amino-acid sequence, 186 residues long: MKSSPAELISEAKSSTQNSKMKRAVSVLDFILRLIAVVATLASAIAMGTTDESLPFFTQFIRFRAEYDDLPTLRLFVVASAFASGYLILSLPLSILHITRSSARRTRVILIILDMVMLTSLTAASSAAAAIVYLAHKGNAKANWFAFCQQYDSFCERISGSLIGSFIAIPLFIMLILFSALVLSKR.

The Cytoplasmic segment spans residues 1–26; it reads MKSSPAELISEAKSSTQNSKMKRAVS. The helical transmembrane segment at 27 to 47 threads the bilayer; sequence VLDFILRLIAVVATLASAIAM. Topologically, residues 48-74 are extracellular; the sequence is GTTDESLPFFTQFIRFRAEYDDLPTLR. A helical transmembrane segment spans residues 75 to 95; the sequence is LFVVASAFASGYLILSLPLSI. Over 96–107 the chain is Cytoplasmic; it reads LHITRSSARRTR. Residues 108 to 128 traverse the membrane as a helical segment; that stretch reads VILIILDMVMLTSLTAASSAA. The Extracellular portion of the chain corresponds to 129–161; it reads AAIVYLAHKGNAKANWFAFCQQYDSFCERISGS. Residues 162–182 form a helical membrane-spanning segment; that stretch reads LIGSFIAIPLFIMLILFSALV. The Cytoplasmic segment spans residues 183–186; it reads LSKR.

It belongs to the Casparian strip membrane proteins (CASP) family. As to quaternary structure, homodimer and heterodimers.

It localises to the cell membrane. In terms of biological role, regulates membrane-cell wall junctions and localized cell wall deposition. Required for establishment of the Casparian strip membrane domain (CSD) and the subsequent formation of Casparian strips, a cell wall modification of the root endodermis that determines an apoplastic barrier between the intraorganismal apoplasm and the extraorganismal apoplasm and prevents lateral diffusion. This is Casparian strip membrane protein 1 from Lotus japonicus (Lotus corniculatus var. japonicus).